The following is a 260-amino-acid chain: Opacity protein opA58 (260 aa).

The N-terminal stretch at 1–23 (MNPAPKKPSLLFSSLLFSSAAQA) is a signal peptide.

Belongs to the opacity porin family.

The protein localises to the cell outer membrane. In terms of biological role, implicated in a number of adherence functions. OPA proteins are implicated in pathogenesis and are subject to phase variation. The protein is Opacity protein opA58 (opaJ) of Neisseria gonorrhoeae.